The sequence spans 458 residues: ATP synthase subunit beta (458 aa).

148–155 serves as a coordination point for ATP; sequence GGAGVGKT.

Belongs to the ATPase alpha/beta chains family. As to quaternary structure, F-type ATPases have 2 components, CF(1) - the catalytic core - and CF(0) - the membrane proton channel. CF(1) has five subunits: alpha(3), beta(3), gamma(1), delta(1), epsilon(1). CF(0) has three main subunits: a(1), b(2) and c(9-12). The alpha and beta chains form an alternating ring which encloses part of the gamma chain. CF(1) is attached to CF(0) by a central stalk formed by the gamma and epsilon chains, while a peripheral stalk is formed by the delta and b chains.

It is found in the cell inner membrane. It catalyses the reaction ATP + H2O + 4 H(+)(in) = ADP + phosphate + 5 H(+)(out). In terms of biological role, produces ATP from ADP in the presence of a proton gradient across the membrane. The catalytic sites are hosted primarily by the beta subunits. The sequence is that of ATP synthase subunit beta from Pseudomonas entomophila (strain L48).